A 154-amino-acid polypeptide reads, in one-letter code: Transcriptional repressor NrdR (154 aa).

A zinc finger spans residues 3–34; that stretch reads CPFCGANDTKVIDSRLVAEGEQVRRRRECVAC. In terms of domain architecture, ATP-cone spans 49-139; that stretch reads PRLIKQDGTR…VYRRFQDLDE (91 aa).

The protein belongs to the NrdR family. Requires Zn(2+) as cofactor.

Its function is as follows. Negatively regulates transcription of bacterial ribonucleotide reductase nrd genes and operons by binding to NrdR-boxes. This Pseudomonas entomophila (strain L48) protein is Transcriptional repressor NrdR.